The primary structure comprises 132 residues: Protein NrdI (132 aa).

Belongs to the NrdI family.

Functionally, probably involved in ribonucleotide reductase function. The protein is Protein NrdI of Staphylococcus haemolyticus (strain JCSC1435).